Here is a 386-residue protein sequence, read N- to C-terminus: Succinate--CoA ligase [ADP-forming] subunit beta (386 aa).

An ATP-grasp domain is found at 9–244 (KELLREFGVA…TTEEDPREVE (236 aa)). ATP-binding positions include lysine 46, 53–55 (GRG), glutamate 99, serine 102, and glutamate 107. The Mg(2+) site is built by asparagine 199 and aspartate 213. Substrate-binding positions include asparagine 264 and 321 to 323 (GIM).

This sequence belongs to the succinate/malate CoA ligase beta subunit family. As to quaternary structure, heterotetramer of two alpha and two beta subunits. Requires Mg(2+) as cofactor.

The catalysed reaction is succinate + ATP + CoA = succinyl-CoA + ADP + phosphate. The enzyme catalyses GTP + succinate + CoA = succinyl-CoA + GDP + phosphate. It functions in the pathway carbohydrate metabolism; tricarboxylic acid cycle; succinate from succinyl-CoA (ligase route): step 1/1. In terms of biological role, succinyl-CoA synthetase functions in the citric acid cycle (TCA), coupling the hydrolysis of succinyl-CoA to the synthesis of either ATP or GTP and thus represents the only step of substrate-level phosphorylation in the TCA. The beta subunit provides nucleotide specificity of the enzyme and binds the substrate succinate, while the binding sites for coenzyme A and phosphate are found in the alpha subunit. The protein is Succinate--CoA ligase [ADP-forming] subunit beta of Exiguobacterium sp. (strain ATCC BAA-1283 / AT1b).